A 535-amino-acid polypeptide reads, in one-letter code: Formate--tetrahydrofolate ligase (535 aa).

An ATP-binding site is contributed by 50 to 57; that stretch reads TPAGEGKT.

It belongs to the formate--tetrahydrofolate ligase family.

It catalyses the reaction (6S)-5,6,7,8-tetrahydrofolate + formate + ATP = (6R)-10-formyltetrahydrofolate + ADP + phosphate. It participates in one-carbon metabolism; tetrahydrofolate interconversion. The protein is Formate--tetrahydrofolate ligase of Picrophilus torridus (strain ATCC 700027 / DSM 9790 / JCM 10055 / NBRC 100828 / KAW 2/3).